The primary structure comprises 160 residues: Cyclic pyranopterin monophosphate synthase (160 aa).

Substrate contacts are provided by residues Leu75 to His77 and Met113 to Glu114. Asp128 is an active-site residue.

This sequence belongs to the MoaC family. As to quaternary structure, homohexamer; trimer of dimers.

The catalysed reaction is (8S)-3',8-cyclo-7,8-dihydroguanosine 5'-triphosphate = cyclic pyranopterin phosphate + diphosphate. It participates in cofactor biosynthesis; molybdopterin biosynthesis. Its function is as follows. Catalyzes the conversion of (8S)-3',8-cyclo-7,8-dihydroguanosine 5'-triphosphate to cyclic pyranopterin monophosphate (cPMP). The polypeptide is Cyclic pyranopterin monophosphate synthase (Sodalis glossinidius (strain morsitans)).